The primary structure comprises 92 residues: uncharacterized protein (92 aa).

The disordered stretch occupies residues 1 to 92; sequence MSDAAAPAQA…PSPSQQQVAA (92 aa).

This is an uncharacterized protein from Caenorhabditis elegans.